The primary structure comprises 196 residues: uncharacterized protein (196 aa).

This is an uncharacterized protein from Caenorhabditis elegans.